Here is a 164-residue protein sequence, read N- to C-terminus: UPF0304 protein YfbU (164 aa).

This sequence belongs to the UPF0304 family.

The sequence is that of UPF0304 protein YfbU (yfbU) from Escherichia coli O6:H1 (strain CFT073 / ATCC 700928 / UPEC).